Consider the following 248-residue polypeptide: PF03932 family protein CutC (248 aa).

The protein belongs to the CutC family. In terms of assembly, homodimer.

It is found in the cytoplasm. The sequence is that of PF03932 family protein CutC from Shigella dysenteriae serotype 1 (strain Sd197).